A 1280-amino-acid chain; its full sequence is Pullulanase A (1280 aa).

The signal sequence occupies residues 1–44 (MRKTPSHTEKKMVYSIRSLKNGTGSVLIGASLVLLAMATPTISS). Residues 42 to 132 (ISSDESTPTT…VTTETKAEEP (91 aa)) form a disordered region. Low complexity predominate over residues 48-61 (TPTTNEPNNRNTTT). Over residues 79–90 (DISSPGNANASL) the composition is skewed to polar residues. Residues 115 to 126 (EPTTSTSPVTTE) show a composition bias toward low complexity. Residues 156–158 (WTW), Trp-168, Asp-214, 263–265 (WYW), Trp-276, Lys-318, and Asn-323 each bind substrate. Ser-661 and Tyr-663 together coordinate Ca(2+). Substrate is bound by residues 667 to 668 (YD) and Phe-743. Residue Asp-778 is the Nucleophile of the active site. Glu-807 acts as the Proton donor in catalysis. Trp-809 is a substrate binding site. 3 residues coordinate Ca(2+): Met-828, Thr-831, and Asp-832. Substrate-binding residues include Asp-839, Arg-842, and Tyr-849. Residues Asp-882 and Asp-886 each contribute to the Ca(2+) site. Residues Asn-896, Lys-969, and 989-991 (DSY) each bind substrate. A Ca(2+)-binding site is contributed by Asp-992. Residues 1140 to 1248 (VSQNGTSHES…TPDKQAELPN (109 aa)) form a disordered region. Positions 1149–1196 (STAEEKPDSTPSKPEHQNEASHPAHQDPAPEARPDSTKPDAKVADAEN) are enriched in basic and acidic residues. Low complexity predominate over residues 1205–1218 (SQAEQPAQEAQASS). The LPXTG sorting signal signature appears at 1246–1250 (LPNTG). Residue Thr-1249 is modified to Pentaglycyl murein peptidoglycan amidated threonine. Residues 1250–1280 (GIKNENKLLFAGISLLALLGLGFLLKNKKEN) constitute a propeptide, removed by sortase.

This sequence belongs to the glycosyl hydrolase 13 family.

The protein resides in the secreted. It is found in the cell wall. It localises to the cell surface. The enzyme catalyses Hydrolysis of (1-&gt;6)-alpha-D-glucosidic linkages in pullulan, amylopectin and glycogen, and in the alpha- and beta-limit dextrins of amylopectin and glycogen.. Inhibited by 4-O-alpha-D-glucopyranosylmoranoline (G1M). Its function is as follows. Virulence factor. Involved in the degradation of glycogen of the mammalian host cells. Hydrolyzes the alpha-1,6-branchpoints of glycogen. Hydrolyzes pullulan. Does not hydrolyze dextran. Binds to mouse lung alveolar type II cells that are rich in glycogen stores. Is an alpha-glucan-specific carbohydrate-binding protein, which binds to amylose (pure alpha-(1,4)-linked glucose), amylopectin (alpha-(1,4)-linked glucose with alpha-(1,6) branch points), pullulan (linear polymer of mixed alpha-(1,4)- and alpha-(1,6)-linked glucose) and glycogen (similar to amylopectin with more frequent alpha-(1,6) branch points) in vitro. Does not bind to dextran (a linear polymer of alpha-(1,6)-linked glucose). This Streptococcus pneumoniae serotype 4 (strain ATCC BAA-334 / TIGR4) protein is Pullulanase A.